The chain runs to 66 residues: Large ribosomal subunit protein bL33c (66 aa).

Belongs to the bacterial ribosomal protein bL33 family.

The protein resides in the plastid. It is found in the chloroplast. The chain is Large ribosomal subunit protein bL33c from Cicer arietinum (Chickpea).